The primary structure comprises 63 residues: Trypsin inhibitor 5 (63 aa).

The first 21 residues, 1-21 (MASVAESSGVVEVIELISDGG), serve as a signal peptide directing secretion. Residues 22–34 (NDLPRKIMSGRHG) constitute a propeptide that is removed on maturation. 3 cysteine pairs are disulfide-bonded: cysteine 37–cysteine 54, cysteine 44–cysteine 56, and cysteine 50–cysteine 62.

This sequence belongs to the protease inhibitor I7 (squash-type serine protease inhibitor) family.

The protein resides in the secreted. Functionally, inhibits trypsin. This Luffa aegyptiaca (Sponge gourd) protein is Trypsin inhibitor 5.